A 477-amino-acid polypeptide reads, in one-letter code: Transmembrane and coiled-coil domain protein 3 (477 aa).

Position 46 is a phosphoserine (Ser-46). Positions 112 to 153 (KQVFEKKNQKSAHSIAQLQKKLEQYHRKLREIEQNGASRSSK) form a coiled coil. Disordered stretches follow at residues 168–188 (KDAH…KSGM) and 249–277 (PKYG…GAGG). Ser-253 bears the Phosphoserine mark. A compositionally biased stretch (polar residues) spans 258-273 (SSGTSGSADSNGNQSF). Residues 282–398 (DSQGKLAVIL…KLELHQQEQQ (117 aa)) are a coiled coil. 2 helical membrane-spanning segments follow: residues 417–437 (VILA…KFVS) and 450–470 (FFAV…LCAI).

It belongs to the TEX28 family. May form homodimers and heterodimers with TMCC2 or TMCC3 via the coiled-coil domains. Interacts with ribosomal proteins RPL4 and RPS6. As to expression, widely expressed, with highest levels in brain, spinal cord and testis.

It localises to the endoplasmic reticulum membrane. In Homo sapiens (Human), this protein is Transmembrane and coiled-coil domain protein 3.